The primary structure comprises 293 residues: MAWIQLRIHTHRDNADLLGDLLMDQGSLSITYEDGQDEPIFEPKLGETPLWQDTVMIALFDAGTDLAPTIEFLESMPFLGKGFNHKIEQVEDKDWIREWMDSFHPIQFGSRLWICPSWREIPDPTAVNVILDPGLAFGTGTHPTTALCLEWLDSLDLSNQEVIDFGCGSGILAIAAIKLGAKKVTGVDIDYQAIDASKANAERNDVVDKLALYLPEDQPANLQADVLVANILAGPLKELAPLIAEKVKIGGKLALSGLLQEQAQEVSDFYSQWFIMDPVSNKEDWSRLTGIRK.

S-adenosyl-L-methionine contacts are provided by T145, G166, D188, and N230.

This sequence belongs to the methyltransferase superfamily. PrmA family.

Its subcellular location is the cytoplasm. The enzyme catalyses L-lysyl-[protein] + 3 S-adenosyl-L-methionine = N(6),N(6),N(6)-trimethyl-L-lysyl-[protein] + 3 S-adenosyl-L-homocysteine + 3 H(+). Functionally, methylates ribosomal protein L11. This is Ribosomal protein L11 methyltransferase from Shewanella frigidimarina (strain NCIMB 400).